We begin with the raw amino-acid sequence, 349 residues long: Peroxidase C3 (349 aa).

The N-terminal stretch at Met1 to Ala29 is a signal peptide. 4 disulfides stabilise this stretch: Cys40/Cys120, Cys73/Cys78, Cys126/Cys329, and Cys206/Cys238. Catalysis depends on His71, which acts as the Proton acceptor. Ca(2+) contacts are provided by Asp72, Val75, Gly77, Asp79, and Ser81. The N-linked (GlcNAc...) asparagine glycan is linked to Asn86. A substrate-binding site is contributed by Pro168. Position 199 (His199) interacts with heme b. Thr200 contacts Ca(2+). Residues Asn217 and Asn243 are each glycosylated (N-linked (GlcNAc...) asparagine). The Ca(2+) site is built by Asp251, Thr254, and Asp259.

Belongs to the peroxidase family. Classical plant (class III) peroxidase subfamily. Ca(2+) is required as a cofactor. The cofactor is heme b.

It localises to the secreted. It is found in the vacuole. The catalysed reaction is 2 a phenolic donor + H2O2 = 2 a phenolic radical donor + 2 H2O. Its function is as follows. Removal of H(2)O(2), oxidation of toxic reductants, biosynthesis and degradation of lignin, suberization, auxin catabolism, response to environmental stresses such as wounding, pathogen attack and oxidative stress. These functions might be dependent on each isozyme/isoform in each plant tissue. The chain is Peroxidase C3 (PRXC3) from Armoracia rusticana (Horseradish).